Consider the following 190-residue polypeptide: Crossover junction endodeoxyribonuclease RuvC (190 aa).

Active-site residues include D7, E67, and D140. Residues D7, E67, and D140 each coordinate Mg(2+).

The protein belongs to the RuvC family. Homodimer which binds Holliday junction (HJ) DNA. The HJ becomes 2-fold symmetrical on binding to RuvC with unstacked arms; it has a different conformation from HJ DNA in complex with RuvA. In the full resolvosome a probable DNA-RuvA(4)-RuvB(12)-RuvC(2) complex forms which resolves the HJ. Mg(2+) is required as a cofactor.

The protein localises to the cytoplasm. The catalysed reaction is Endonucleolytic cleavage at a junction such as a reciprocal single-stranded crossover between two homologous DNA duplexes (Holliday junction).. Its function is as follows. The RuvA-RuvB-RuvC complex processes Holliday junction (HJ) DNA during genetic recombination and DNA repair. Endonuclease that resolves HJ intermediates. Cleaves cruciform DNA by making single-stranded nicks across the HJ at symmetrical positions within the homologous arms, yielding a 5'-phosphate and a 3'-hydroxyl group; requires a central core of homology in the junction. The consensus cleavage sequence is 5'-(A/T)TT(C/G)-3'. Cleavage occurs on the 3'-side of the TT dinucleotide at the point of strand exchange. HJ branch migration catalyzed by RuvA-RuvB allows RuvC to scan DNA until it finds its consensus sequence, where it cleaves and resolves the cruciform DNA. This chain is Crossover junction endodeoxyribonuclease RuvC, found in Fusobacterium nucleatum subsp. nucleatum (strain ATCC 25586 / DSM 15643 / BCRC 10681 / CIP 101130 / JCM 8532 / KCTC 2640 / LMG 13131 / VPI 4355).